We begin with the raw amino-acid sequence, 91 residues long: Acylphosphatase (91 aa).

An Acylphosphatase-like domain is found at 3 to 90 (RVLIRVKGKV…EIYLDFSITQ (88 aa)). Catalysis depends on residues Arg-18 and Asn-36.

The protein belongs to the acylphosphatase family.

The catalysed reaction is an acyl phosphate + H2O = a carboxylate + phosphate + H(+). This is Acylphosphatase (acyP) from Shewanella amazonensis (strain ATCC BAA-1098 / SB2B).